The sequence spans 200 residues: uncharacterized protein (200 aa).

Residues Ser-104–Gly-124 form a helical membrane-spanning segment.

Its subcellular location is the membrane. This is an uncharacterized protein from Escherichia coli (strain K12).